Consider the following 688-residue polypeptide: DNA ligase (688 aa).

NAD(+) contacts are provided by residues 51-55, 100-101, and glutamate 129; these read DSEYD and SL. The active-site N6-AMP-lysine intermediate is lysine 131. 4 residues coordinate NAD(+): arginine 152, glutamate 189, lysine 308, and lysine 332. Cysteine 426, cysteine 429, cysteine 444, and cysteine 450 together coordinate Zn(2+). The BRCT domain occupies 609 to 688; sequence ADEQPLKGQT…DELLALLANS (80 aa).

Belongs to the NAD-dependent DNA ligase family. LigA subfamily. Mg(2+) is required as a cofactor. It depends on Mn(2+) as a cofactor.

It catalyses the reaction NAD(+) + (deoxyribonucleotide)n-3'-hydroxyl + 5'-phospho-(deoxyribonucleotide)m = (deoxyribonucleotide)n+m + AMP + beta-nicotinamide D-nucleotide.. Its function is as follows. DNA ligase that catalyzes the formation of phosphodiester linkages between 5'-phosphoryl and 3'-hydroxyl groups in double-stranded DNA using NAD as a coenzyme and as the energy source for the reaction. It is essential for DNA replication and repair of damaged DNA. This Shewanella sp. (strain MR-4) protein is DNA ligase.